The sequence spans 1405 residues: DNA-directed RNA polymerase subunit beta' (1405 aa).

Zn(2+) is bound by residues Cys70, Cys72, Cys85, and Cys88. Residues Asp460, Asp462, and Asp464 each contribute to the Mg(2+) site. Residues Cys815, Cys889, Cys896, and Cys899 each contribute to the Zn(2+) site. The tract at residues 1363–1388 (LAHHAERRRRREDPESTANPSAFDVE) is disordered.

Belongs to the RNA polymerase beta' chain family. In terms of assembly, the RNAP catalytic core consists of 2 alpha, 1 beta, 1 beta' and 1 omega subunit. When a sigma factor is associated with the core the holoenzyme is formed, which can initiate transcription. It depends on Mg(2+) as a cofactor. The cofactor is Zn(2+).

The enzyme catalyses RNA(n) + a ribonucleoside 5'-triphosphate = RNA(n+1) + diphosphate. DNA-dependent RNA polymerase catalyzes the transcription of DNA into RNA using the four ribonucleoside triphosphates as substrates. This chain is DNA-directed RNA polymerase subunit beta', found in Chromohalobacter salexigens (strain ATCC BAA-138 / DSM 3043 / CIP 106854 / NCIMB 13768 / 1H11).